Reading from the N-terminus, the 541-residue chain is Chaperonin GroEL 2 (541 aa).

ATP-binding positions include 29–32 (TLGP), 86–90 (DGTTT), Gly413, and Asp492.

Belongs to the chaperonin (HSP60) family. In terms of assembly, forms a cylinder of 14 subunits composed of two heptameric rings stacked back-to-back. Interacts with the co-chaperonin GroES.

It localises to the cytoplasm. It carries out the reaction ATP + H2O + a folded polypeptide = ADP + phosphate + an unfolded polypeptide.. Functionally, together with its co-chaperonin GroES, plays an essential role in assisting protein folding. The GroEL-GroES system forms a nano-cage that allows encapsulation of the non-native substrate proteins and provides a physical environment optimized to promote and accelerate protein folding. The sequence is that of Chaperonin GroEL 2 from Acidothermus cellulolyticus (strain ATCC 43068 / DSM 8971 / 11B).